A 265-amino-acid polypeptide reads, in one-letter code: ATP synthase subunit a (265 aa).

A run of 5 helical transmembrane segments spans residues F25–W45, I88–I108, D142–I162, L207–W227, and F233–L253.

Belongs to the ATPase A chain family. F-type ATPases have 2 components, CF(1) - the catalytic core - and CF(0) - the membrane proton channel. CF(1) has five subunits: alpha(3), beta(3), gamma(1), delta(1), epsilon(1). CF(0) has three main subunits: a(1), b(2) and c(9-12). The alpha and beta chains form an alternating ring which encloses part of the gamma chain. CF(1) is attached to CF(0) by a central stalk formed by the gamma and epsilon chains, while a peripheral stalk is formed by the delta and b chains.

Its subcellular location is the cell inner membrane. Functionally, key component of the proton channel; it plays a direct role in the translocation of protons across the membrane. In Idiomarina loihiensis (strain ATCC BAA-735 / DSM 15497 / L2-TR), this protein is ATP synthase subunit a.